The following is a 128-amino-acid chain: Small ribosomal subunit protein uS9 (128 aa).

The disordered stretch occupies residues 105 to 128 (DPRSVERKKPGQPKARRRFQFSKR). The span at 114 to 128 (PGQPKARRRFQFSKR) shows a compositional bias: basic residues.

Belongs to the universal ribosomal protein uS9 family.

This is Small ribosomal subunit protein uS9 from Bacteroides thetaiotaomicron (strain ATCC 29148 / DSM 2079 / JCM 5827 / CCUG 10774 / NCTC 10582 / VPI-5482 / E50).